The following is a 593-amino-acid chain: A-type ATP synthase subunit A (593 aa).

236–243 (GPFGSGKT) contributes to the ATP binding site.

Belongs to the ATPase alpha/beta chains family. As to quaternary structure, has multiple subunits with at least A(3), B(3), C, D, E, F, H, I and proteolipid K(x).

It is found in the cell membrane. The catalysed reaction is ATP + H2O + 4 H(+)(in) = ADP + phosphate + 5 H(+)(out). Functionally, produces ATP from ADP in the presence of a proton gradient across the membrane. The archaeal alpha chain is a catalytic subunit. Component of the A-type ATP synthase that produces ATP from ADP in the presence of a proton gradient across the membrane. The A chain is the catalytic subunit. This is A-type ATP synthase subunit A from Pyrobaculum aerophilum (strain ATCC 51768 / DSM 7523 / JCM 9630 / CIP 104966 / NBRC 100827 / IM2).